The following is a 91-amino-acid chain: Sec-independent protein translocase protein TatA (91 aa).

The helical transmembrane segment at 1–21 threads the bilayer; that stretch reads MGIFDWKHWIVILIVVVLVFG. The tract at residues 41–91 is disordered; that stretch reads KAMNDDDKPAEQPAPQPQQAQPAPQGSPLNQPHTIDAQAHKVDEPIRKDQV. Positions 51-64 are enriched in low complexity; sequence EQPAPQPQQAQPAP. The span at 78–91 shows a compositional bias: basic and acidic residues; that stretch reads QAHKVDEPIRKDQV.

It belongs to the TatA/E family. In terms of assembly, the Tat system comprises two distinct complexes: a TatABC complex, containing multiple copies of TatA, TatB and TatC subunits, and a separate TatA complex, containing only TatA subunits. Substrates initially bind to the TatABC complex, which probably triggers association of the separate TatA complex to form the active translocon.

It localises to the cell inner membrane. In terms of biological role, part of the twin-arginine translocation (Tat) system that transports large folded proteins containing a characteristic twin-arginine motif in their signal peptide across membranes. TatA could form the protein-conducting channel of the Tat system. The sequence is that of Sec-independent protein translocase protein TatA from Pseudomonas syringae pv. syringae (strain B728a).